The following is a 338-amino-acid chain: Glycerol-3-phosphate dehydrogenase [NAD(P)+] (338 aa).

Serine 18, tyrosine 19, histidine 39, and lysine 113 together coordinate NADPH. Lysine 113, glycine 142, and threonine 144 together coordinate sn-glycerol 3-phosphate. Alanine 146 contacts NADPH. Residues lysine 198, aspartate 251, serine 261, arginine 262, and asparagine 263 each coordinate sn-glycerol 3-phosphate. The active-site Proton acceptor is the lysine 198. NADPH is bound at residue arginine 262. NADPH contacts are provided by valine 286 and glutamate 288.

This sequence belongs to the NAD-dependent glycerol-3-phosphate dehydrogenase family.

Its subcellular location is the cytoplasm. It carries out the reaction sn-glycerol 3-phosphate + NAD(+) = dihydroxyacetone phosphate + NADH + H(+). It catalyses the reaction sn-glycerol 3-phosphate + NADP(+) = dihydroxyacetone phosphate + NADPH + H(+). The protein operates within membrane lipid metabolism; glycerophospholipid metabolism. In terms of biological role, catalyzes the reduction of the glycolytic intermediate dihydroxyacetone phosphate (DHAP) to sn-glycerol 3-phosphate (G3P), the key precursor for phospholipid synthesis. This Photobacterium profundum (strain SS9) protein is Glycerol-3-phosphate dehydrogenase [NAD(P)+].